A 296-amino-acid polypeptide reads, in one-letter code: GTPase Era (296 aa).

One can recognise an Era-type G domain in the interval 3 to 170 (KSGFVTIIGR…IELMVKHLNE (168 aa)). Residues 11-18 (GRPNVGKS) are G1. 11-18 (GRPNVGKS) contributes to the GTP binding site. Residues 37–41 (QTTRN) form a G2 region. The interval 58 to 61 (DTPG) is G3. GTP-binding positions include 58 to 62 (DTPGM) and 120 to 123 (NKID). The tract at residues 120–123 (NKID) is G4. Positions 149–151 (ISA) are G5. In terms of domain architecture, KH type-2 spans 201–277 (LSQEVPHGIA…NMKIWVKVKK (77 aa)).

The protein belongs to the TRAFAC class TrmE-Era-EngA-EngB-Septin-like GTPase superfamily. Era GTPase family. As to quaternary structure, monomer.

Its subcellular location is the cytoplasm. The protein localises to the cell membrane. Functionally, an essential GTPase that binds both GDP and GTP, with rapid nucleotide exchange. Plays a role in 16S rRNA processing and 30S ribosomal subunit biogenesis and possibly also in cell cycle regulation and energy metabolism. The sequence is that of GTPase Era from Clostridium acetobutylicum (strain ATCC 824 / DSM 792 / JCM 1419 / IAM 19013 / LMG 5710 / NBRC 13948 / NRRL B-527 / VKM B-1787 / 2291 / W).